A 414-amino-acid polypeptide reads, in one-letter code: Multidrug resistance protein MdtG (414 aa).

A run of 10 helical transmembrane segments spans residues 14-34 (LFVT…IMPF), 56-76 (LVFS…GSLA), 89-109 (ALGM…WQFL), 113-133 (ALLG…ATQV), 144-164 (TLST…GLLA), 171-191 (PVFF…WFYV), 219-239 (ILSL…IAPI), 254-274 (LAFV…ISAP), 288-308 (ILIA…FVQT), and 376-396 (AVFC…YWCL).

The protein belongs to the major facilitator superfamily. DHA1 family. MdtG (TC 2.A.1.2.20) subfamily.

It is found in the cell inner membrane. The protein is Multidrug resistance protein MdtG of Yersinia enterocolitica serotype O:8 / biotype 1B (strain NCTC 13174 / 8081).